The chain runs to 379 residues: Pectin lyase A (379 aa).

An N-terminal signal peptide occupies residues 1–20; it reads MKTTFLVSLATAALSSTAAA. Cystine bridges form between C83-C102 and C92-C226. R256 is an active-site residue. A disulfide bridge links C323 with C331.

Belongs to the polysaccharide lyase 1 family.

Its subcellular location is the secreted. It carries out the reaction Eliminative cleavage of (1-&gt;4)-alpha-D-galacturonan methyl ester to give oligosaccharides with 4-deoxy-6-O-methyl-alpha-D-galact-4-enuronosyl groups at their non-reducing ends.. In terms of biological role, pectinolytic enzymes consist of four classes of enzymes: pectin lyase, polygalacturonase, pectin methylesterase and rhamnogalacturonase. Among pectinolytic enzymes, pectin lyase is the most important in depolymerization of pectin, since it cleaves internal glycosidic bonds of highly methylated pectins. The protein is Pectin lyase A (pelA) of Emericella nidulans (strain FGSC A4 / ATCC 38163 / CBS 112.46 / NRRL 194 / M139) (Aspergillus nidulans).